We begin with the raw amino-acid sequence, 306 residues long: Oligopeptide transport system permease protein OppB (306 aa).

The Cytoplasmic segment spans residues 1-12; sequence MLKFILRRCLEA. Residues 13–30 traverse the membrane as a helical segment; that stretch reads IPTLFILITISFFMMRLA. The Periplasmic segment spans residues 31–101; it reads PGSPFTGERA…ASFPVSAKLG (71 aa). The region spanning 94-293 is the ABC transmembrane type-1 domain; it reads FPVSAKLGAA…ALTILFNAIV (200 aa). The helical transmembrane segment at 102–121 threads the bilayer; it reads AAAFLLAVIIGVSAGVIAAL. The Cytoplasmic portion of the chain corresponds to 122–133; the sequence is KQNTRWDYTVMG. The helical transmembrane segment at 134-156 threads the bilayer; that stretch reads FAMTGVVIPSFVVAPLLVMVFAI. The Periplasmic segment spans residues 157–165; sequence TLQWLPGGG. A helical membrane pass occupies residues 166–188; it reads WNGGALKFMILPMVALSLAYIAS. Residues 189–227 are Cytoplasmic-facing; it reads IARITRGSMIEVLHSNFIRTARAKGLPMRRIIFRHALKP. The helical transmembrane segment at 228–250 threads the bilayer; the sequence is ALLPVLSYMGPAFVGIITGSMVI. Residues 251–277 lie on the Periplasmic side of the membrane; that stretch reads ETIYGLPGIGQLFVNGALNRDYSLVLS. Residues 278–300 traverse the membrane as a helical segment; the sequence is LTILVGALTILFNAIVDVLYAVI. The Cytoplasmic portion of the chain corresponds to 301-306; the sequence is DPKIRY.

The protein belongs to the binding-protein-dependent transport system permease family. OppBC subfamily. In terms of assembly, the complex is composed of two ATP-binding proteins (OppD and OppF), two transmembrane proteins (OppB and OppC) and a solute-binding protein (OppA).

Its subcellular location is the cell inner membrane. Its function is as follows. Part of the ABC transporter complex OppABCDF involved in the uptake of oligopeptides, including the cell wall murein tripeptide L-alanyl-gamma-D-glutamyl-meso-diaminopimelate. Responsible for the translocation of the substrate across the membrane. Plays an important nutritional role and is involved in the recycling of cell wall peptides. The chain is Oligopeptide transport system permease protein OppB from Salmonella typhimurium (strain LT2 / SGSC1412 / ATCC 700720).